The chain runs to 110 residues: Large ribosomal subunit protein P1 (110 aa).

At Ala-2 the chain carries Blocked amino end (Ala). The segment covering 69–83 (AAPAAGGAAAATEAP) has biased composition (low complexity). The disordered stretch occupies residues 69 to 110 (AAPAAGGAAAATEAPAAKEEKKEEKKEESEEEDEDMGFGLFD). A compositionally biased stretch (basic and acidic residues) spans 84 to 96 (AAKEEKKEEKKEE). Ser-97 carries the post-translational modification Phosphoserine; in form eL12'-P.

In terms of assembly, part of the ribosomal stalk of the large ribosomal subunit; P1 and P2 exist as dimers which assemble on the P0 scaffold. Post-translationally, phosphorylation of Ser-97 converts eL12' to eL12'-P.

In terms of biological role, plays an important role in the elongation step of protein synthesis. The polypeptide is Large ribosomal subunit protein P1 (Artemia salina (Brine shrimp)).